A 138-amino-acid polypeptide reads, in one-letter code: Large ribosomal subunit protein uL16 (138 aa).

A compositionally biased stretch (basic residues) spans Met-1 to Gln-13. The interval Met-1–Ile-20 is disordered.

Belongs to the universal ribosomal protein uL16 family. As to quaternary structure, part of the 50S ribosomal subunit.

In terms of biological role, binds 23S rRNA and is also seen to make contacts with the A and possibly P site tRNAs. The protein is Large ribosomal subunit protein uL16 of Paraburkholderia phytofirmans (strain DSM 17436 / LMG 22146 / PsJN) (Burkholderia phytofirmans).